The primary structure comprises 542 residues: Exopolysaccharide phosphotransferase CpsY (542 aa).

The segment at 522–542 (SPTVSAPLEDGQTANPAQTAR) is disordered. A compositionally biased stretch (polar residues) spans 533–542 (QTANPAQTAR).

Belongs to the stealth family.

This chain is Exopolysaccharide phosphotransferase CpsY (cpsY), found in Mycobacterium leprae (strain TN).